The sequence spans 100 residues: Large ribosomal subunit protein uL23 (100 aa).

Belongs to the universal ribosomal protein uL23 family. As to quaternary structure, part of the 50S ribosomal subunit. Contacts protein L29, and trigger factor when it is bound to the ribosome.

Its function is as follows. One of the early assembly proteins it binds 23S rRNA. One of the proteins that surrounds the polypeptide exit tunnel on the outside of the ribosome. Forms the main docking site for trigger factor binding to the ribosome. In Shewanella halifaxensis (strain HAW-EB4), this protein is Large ribosomal subunit protein uL23.